We begin with the raw amino-acid sequence, 308 residues long: Tryptophan 2,3-dioxygenase (308 aa).

The tract at residues 1–35 (MQPPGDNAPAGCPFSGAHAAQPAHEAPHVPGDAAG) is disordered. Residues 17 to 30 (AHAAQPAHEAPHVP) are compositionally biased toward low complexity. Residues 77–81 (FIIQH), tyrosine 139, and arginine 143 each bind substrate. Residue histidine 266 coordinates heme. Threonine 280 provides a ligand contact to substrate.

This sequence belongs to the tryptophan 2,3-dioxygenase family. Homotetramer. Heme is required as a cofactor.

The enzyme catalyses L-tryptophan + O2 = N-formyl-L-kynurenine. The protein operates within amino-acid degradation; L-tryptophan degradation via kynurenine pathway; L-kynurenine from L-tryptophan: step 1/2. In terms of biological role, heme-dependent dioxygenase that catalyzes the oxidative cleavage of the L-tryptophan (L-Trp) pyrrole ring and converts L-tryptophan to N-formyl-L-kynurenine. Catalyzes the oxidative cleavage of the indole moiety. The sequence is that of Tryptophan 2,3-dioxygenase from Burkholderia ambifaria (strain ATCC BAA-244 / DSM 16087 / CCUG 44356 / LMG 19182 / AMMD) (Burkholderia cepacia (strain AMMD)).